The sequence spans 205 residues: Holliday junction branch migration complex subunit RuvA (205 aa).

The interval Met1 to Leu65 is domain I. Residues Asp66–Ser144 are domain II. Residues Leu145–Asn153 form a flexible linker region. The segment at Thr154–Lys205 is domain III.

This sequence belongs to the RuvA family. In terms of assembly, homotetramer. Forms an RuvA(8)-RuvB(12)-Holliday junction (HJ) complex. HJ DNA is sandwiched between 2 RuvA tetramers; dsDNA enters through RuvA and exits via RuvB. An RuvB hexamer assembles on each DNA strand where it exits the tetramer. Each RuvB hexamer is contacted by two RuvA subunits (via domain III) on 2 adjacent RuvB subunits; this complex drives branch migration. In the full resolvosome a probable DNA-RuvA(4)-RuvB(12)-RuvC(2) complex forms which resolves the HJ.

It localises to the cytoplasm. In terms of biological role, the RuvA-RuvB-RuvC complex processes Holliday junction (HJ) DNA during genetic recombination and DNA repair, while the RuvA-RuvB complex plays an important role in the rescue of blocked DNA replication forks via replication fork reversal (RFR). RuvA specifically binds to HJ cruciform DNA, conferring on it an open structure. The RuvB hexamer acts as an ATP-dependent pump, pulling dsDNA into and through the RuvAB complex. HJ branch migration allows RuvC to scan DNA until it finds its consensus sequence, where it cleaves and resolves the cruciform DNA. The polypeptide is Holliday junction branch migration complex subunit RuvA (Orientia tsutsugamushi (strain Ikeda) (Rickettsia tsutsugamushi)).